We begin with the raw amino-acid sequence, 71 residues long: Omega-conotoxin SO-3 (71 aa).

A signal peptide spans 1 to 22 (MKLTCMVIVAVLLLTACQLITA). Positions 23-45 (DDSRGTQKHRTLRSKTKLSMSTR) are excised as a propeptide. Intrachain disulfides connect C46–C61, C53–C65, and C60–C70. C70 carries the post-translational modification Cysteine amide.

The protein belongs to the conotoxin O1 superfamily. In terms of tissue distribution, expressed by the venom duct.

It localises to the secreted. Its function is as follows. Omega-conotoxins act at presynaptic membranes, they bind and block voltage-gated calcium channels (Cav). This peptide selectively targets Cav2.2/CACNA1B (IC(50)=160 nM) voltage-gated calcium channels. When tested in mammals, this toxin displays an analgesic potency similar to MVIIA in a range of acute and chronic pain models in rodents, but has less adverse effects (tremor, diminution of spontaneous locomotor activity and bad coordinated locomotion) compared with identical dosages of MVIIA injected intrathecally. This is Omega-conotoxin SO-3 from Conus striatus (Striated cone).